A 262-amino-acid chain; its full sequence is Phosphatidylserine decarboxylase proenzyme (262 aa).

Residues aspartate 86, histidine 142, and serine 226 each act as charge relay system; for autoendoproteolytic cleavage activity in the active site. The active-site Schiff-base intermediate with substrate; via pyruvic acid; for decarboxylase activity is the serine 226. Serine 226 is subject to Pyruvic acid (Ser); by autocatalysis.

Belongs to the phosphatidylserine decarboxylase family. PSD-B subfamily. Prokaryotic type I sub-subfamily. As to quaternary structure, heterodimer of a large membrane-associated beta subunit and a small pyruvoyl-containing alpha subunit. The cofactor is pyruvate. Post-translationally, is synthesized initially as an inactive proenzyme. Formation of the active enzyme involves a self-maturation process in which the active site pyruvoyl group is generated from an internal serine residue via an autocatalytic post-translational modification. Two non-identical subunits are generated from the proenzyme in this reaction, and the pyruvate is formed at the N-terminus of the alpha chain, which is derived from the carboxyl end of the proenzyme. The autoendoproteolytic cleavage occurs by a canonical serine protease mechanism, in which the side chain hydroxyl group of the serine supplies its oxygen atom to form the C-terminus of the beta chain, while the remainder of the serine residue undergoes an oxidative deamination to produce ammonia and the pyruvoyl prosthetic group on the alpha chain. During this reaction, the Ser that is part of the protease active site of the proenzyme becomes the pyruvoyl prosthetic group, which constitutes an essential element of the active site of the mature decarboxylase.

The protein localises to the cell membrane. The enzyme catalyses a 1,2-diacyl-sn-glycero-3-phospho-L-serine + H(+) = a 1,2-diacyl-sn-glycero-3-phosphoethanolamine + CO2. Its pathway is phospholipid metabolism; phosphatidylethanolamine biosynthesis; phosphatidylethanolamine from CDP-diacylglycerol: step 2/2. Its function is as follows. Catalyzes the formation of phosphatidylethanolamine (PtdEtn) from phosphatidylserine (PtdSer). The polypeptide is Phosphatidylserine decarboxylase proenzyme (Bacillus thuringiensis (strain Al Hakam)).